Here is an 866-residue protein sequence, read N- to C-terminus: Potassium voltage-gated channel subfamily KQT member 3 (866 aa).

Residues M1–K42 form a disordered region. The Cytoplasmic portion of the chain corresponds to M1 to G120. Gly residues predominate over residues A11 to A25. A compositionally biased stretch (low complexity) spans A26–A36. Residue T81 is modified to Phosphothreonine. Residues W121–T143 traverse the membrane as a helical segment. The Extracellular segment spans residues T144–G153. The helical transmembrane segment at D154–I175 threads the bilayer. Residues W176–F193 lie on the Cytoplasmic side of the membrane. Residues A194–V213 traverse the membrane as a helical segment. Over A214–S225 the chain is Extracellular. Residues L226 to G244 traverse the membrane as a helical; Voltage-sensor segment. Position 243 (R243) interacts with a 1,2-diacyl-sn-glycero-3-phospho-(1D-myo-inositol-4,5-bisphosphate). At G245–A256 the chain is on the cytoplasmic side. The helical transmembrane segment at H257–V282 threads the bilayer. K259 is a binding site for a 1,2-diacyl-sn-glycero-3-phospho-(1D-myo-inositol-4,5-bisphosphate). Residues E283–T302 lie on the Extracellular side of the membrane. Residues Y303–A315 constitute an intramembrane region (pore-forming). A Selectivity filter motif is present at residues T316 to D321. Residues T316–T326 are Extracellular-facing. A helical membrane pass occupies residues W327–S353. The Cytoplasmic portion of the chain corresponds to G354–T866. The mediates interaction with calmodulin stretch occupies residues A356–T537. K366 lines the a 1,2-diacyl-sn-glycero-3-phospho-(1D-myo-inositol-4,5-bisphosphate) pocket. Disordered stretches follow at residues P574–S617, G656–R676, and Q757–T866. Residues E837–T866 are compositionally biased toward polar residues.

This sequence belongs to the potassium channel family. KQT (TC 1.A.1.15) subfamily. Kv7.3/KCNQ3 sub-subfamily. As to quaternary structure, heterotetramer with KCNQ2; forms heterotetrameric native M-channel responsible for the M-current. Interacts with calmodulin; the interaction is calcium-independent, constitutive and participates in the proper assembly of a functional M-channel. Heteromultimer with KCNQ5. May associate with KCNE2. Interacts with IQCJ-SCHIP1. Interacts (via the pore module) with SLC5A3/SMIT1; forms a coregulatory complex that alters ion selectivity, voltage dependence and gating kinetics of the channel. Post-translationally, KCNQ2/KCNQ3 are ubiquitinated by NEDD4L. Ubiquitination leads to protein degradation. Degradation induced by NEDD4L is inhibited by USP36.

The protein localises to the cell membrane. It carries out the reaction K(+)(in) = K(+)(out). The catalysed reaction is Rb(+)(in) = Rb(+)(out). It catalyses the reaction Cs(+)(in) = Cs(+)(out). The enzyme catalyses Na(+)(in) = Na(+)(out). Phosphatidylinositol-4,5-bisphosphate (PIP2) potentiates the activation of KCNQ channels by enhancing the electro-mechanical coupling of the voltage-sensing domain (VSD) and the pore-forming domain (PD). In the closed state of the channel, PIP2 is anchored at the S2-S3 loop; upon channel activation, PIP2 interacts with the S4-S5 linker and is involved in channel gating. Calcium suppresses KCNQ2-KCNQ3 channel currents, with calcium-bound calmodulin inducing a change in channel configuration which leads to the reduction of channel affinity for PIP2 and subsequent current suppression. Pore-forming subunit of the voltage-gated potassium (Kv) M-channel which is responsible for the M-current, a key controller of neuronal excitability. M-channel is composed of pore-forming subunits KCNQ2 and KCNQ3 assembled as heterotetramers. The native M-current has a slowly activating and deactivating potassium conductance which plays a critical role in determining the subthreshold electrical excitability of neurons as well as the responsiveness to synaptic inputs. M-channel is selectively permeable in vitro to other cations besides potassium, in decreasing order of affinity K(+) &gt; Rb(+) &gt; Cs(+) &gt; Na(+). M-channel association with SLC5A3/SMIT1 alters channel ion selectivity, increasing Na(+) and Cs(+) permeation relative to K(+). Suppressed by activation of M1 muscarinic acetylcholine receptors. KCNQ3 also associates with KCNQ5 to form a functional channel in vitro and may also contribute to the M-current in brain. The chain is Potassium voltage-gated channel subfamily KQT member 3 from Bos taurus (Bovine).